The following is a 96-amino-acid chain: Co-chaperonin GroES (96 aa).

It belongs to the GroES chaperonin family. As to quaternary structure, heptamer of 7 subunits arranged in a ring. Interacts with the chaperonin GroEL.

Its subcellular location is the cytoplasm. Together with the chaperonin GroEL, plays an essential role in assisting protein folding. The GroEL-GroES system forms a nano-cage that allows encapsulation of the non-native substrate proteins and provides a physical environment optimized to promote and accelerate protein folding. GroES binds to the apical surface of the GroEL ring, thereby capping the opening of the GroEL channel. This Caulobacter sp. (strain K31) protein is Co-chaperonin GroES.